The following is a 292-amino-acid chain: Phosphatidylserine decarboxylase proenzyme (292 aa).

Active-site charge relay system; for autoendoproteolytic cleavage activity residues include Asp89, His146, and Ser252. Ser252 functions as the Schiff-base intermediate with substrate; via pyruvic acid; for decarboxylase activity in the catalytic mechanism. Ser252 carries the post-translational modification Pyruvic acid (Ser); by autocatalysis.

It belongs to the phosphatidylserine decarboxylase family. PSD-B subfamily. Prokaryotic type I sub-subfamily. As to quaternary structure, heterodimer of a large membrane-associated beta subunit and a small pyruvoyl-containing alpha subunit. Requires pyruvate as cofactor. Post-translationally, is synthesized initially as an inactive proenzyme. Formation of the active enzyme involves a self-maturation process in which the active site pyruvoyl group is generated from an internal serine residue via an autocatalytic post-translational modification. Two non-identical subunits are generated from the proenzyme in this reaction, and the pyruvate is formed at the N-terminus of the alpha chain, which is derived from the carboxyl end of the proenzyme. The autoendoproteolytic cleavage occurs by a canonical serine protease mechanism, in which the side chain hydroxyl group of the serine supplies its oxygen atom to form the C-terminus of the beta chain, while the remainder of the serine residue undergoes an oxidative deamination to produce ammonia and the pyruvoyl prosthetic group on the alpha chain. During this reaction, the Ser that is part of the protease active site of the proenzyme becomes the pyruvoyl prosthetic group, which constitutes an essential element of the active site of the mature decarboxylase.

The protein resides in the cell membrane. The enzyme catalyses a 1,2-diacyl-sn-glycero-3-phospho-L-serine + H(+) = a 1,2-diacyl-sn-glycero-3-phosphoethanolamine + CO2. Its pathway is phospholipid metabolism; phosphatidylethanolamine biosynthesis; phosphatidylethanolamine from CDP-diacylglycerol: step 2/2. Its function is as follows. Catalyzes the formation of phosphatidylethanolamine (PtdEtn) from phosphatidylserine (PtdSer). The sequence is that of Phosphatidylserine decarboxylase proenzyme from Shewanella baltica (strain OS185).